A 222-amino-acid polypeptide reads, in one-letter code: Millepora cytotoxin-1 (222 aa).

Positions 1–20 (MVTLYLHVPILLLVVITARA) are cleaved as a signal peptide. The propeptide occupies 21–75 (APKPDTHNPFDELSSVAEKQDLHYGDRSRKDPFIAQNDVGNNFRDGTQENLTKVR). Intrachain disulfides connect Cys89–Cys115, Cys142–Cys168, and Cys179–Cys222. 3 consecutive repeats follow at residues 100–109 (SIHDNHYEDR), 153–162 (SIHDNYYEDR), and 206–215 (SQHNNYYEDR).

It belongs to the dermatopontin family. Is not glycosylated.

The protein resides in the secreted. It localises to the nematocyst. Is potently cytotoxic (EC(50) value 79 ng/mL) towards L1210 mouse leukemia cells, has hemagglutination activity on sheep erythrocytes, and is lethal in crayfish. Has no phospholipase A2 activity. This chain is Millepora cytotoxin-1, found in Millepora dichotoma (Net fire coral).